The following is a 219-amino-acid chain: Small ribosomal subunit protein uS4 (219 aa).

The 63-residue stretch at 112 to 174 (RRLQTQVLRL…GSSPLMSESH (63 aa)) folds into the S4 RNA-binding domain. A disordered region spans residues 193-219 (KAAAEAKQARERPPERGGGRKKRGGRR). Basic and acidic residues predominate over residues 199–210 (KQARERPPERGG).

Belongs to the universal ribosomal protein uS4 family. Part of the 30S ribosomal subunit. Contacts protein S5. The interaction surface between S4 and S5 is involved in control of translational fidelity.

Functionally, one of the primary rRNA binding proteins, it binds directly to 16S rRNA where it nucleates assembly of the body of the 30S subunit. With S5 and S12 plays an important role in translational accuracy. The protein is Small ribosomal subunit protein uS4 of Methanosarcina mazei (strain ATCC BAA-159 / DSM 3647 / Goe1 / Go1 / JCM 11833 / OCM 88) (Methanosarcina frisia).